The sequence spans 331 residues: UPF0194 membrane protein YbhG (331 aa).

The signal sequence occupies residues 1-19 (MKKPVVIGLAIAAIVTVIA). Positions 107-208 (EEIAQAAAAV…LDLQDTTLIA (102 aa)) form a coiled coil.

Belongs to the UPF0194 family.

It is found in the periplasm. This chain is UPF0194 membrane protein YbhG, found in Salmonella arizonae (strain ATCC BAA-731 / CDC346-86 / RSK2980).